The chain runs to 293 residues: TIWLDLNMFLSLGVDCWIDNTRVVYNRSSGRVSNAPGVEIRVPGFGKTYSVEYLDDNKLAEYMHTLVQNLVNNGYVRDETVRAAPYDWRLEPSQQDDYYQKLAGLIEEMYAAYGKPVFLIGHSLGCLHVLYFLLRQGIPIMSSIKLREEQRITTTSPWMFPDRDVWPEDHVFISTPEFNYTGQDFERFFSDLHFEEGWYMWLQSRDLLAGLPAPGVDVYCLYGVGLPTPHTYIYDHNFPYKDPVAALYEDGDDTVATRSTELCGQWQGRQSQPVHLLPMNGTEHLNMVFSNKT.

Asn26 carries an N-linked (GlcNAc...) asparagine glycan. Ser123 serves as the catalytic Nucleophile. Residue Asn179 is glycosylated (N-linked (GlcNAc...) asparagine). The cysteines at positions 220 and 263 are disulfide-linked. The active-site Charge relay system is Asp252. An N-linked (GlcNAc...) asparagine glycan is attached at Asn280. His284 serves as the catalytic Charge relay system.

This sequence belongs to the AB hydrolase superfamily. Lipase family.

The protein localises to the secreted. The catalysed reaction is a sterol + a 1,2-diacyl-sn-glycero-3-phosphocholine = a sterol ester + a 1-acyl-sn-glycero-3-phosphocholine. Its activity is regulated as follows. APOA1 is the most potent activator in plasma. Also activated by APOE, APOC1 and APOA4. In terms of biological role, central enzyme in the extracellular metabolism of plasma lipoproteins. Synthesized mainly in the liver and secreted into plasma where it converts cholesterol and phosphatidylcholines (lecithins) to cholesteryl esters and lysophosphatidylcholines on the surface of high and low density lipoproteins (HDLs and LDLs). The cholesterol ester is then transported back to the liver. Has a preference for plasma 16:0-18:2 or 18:O-18:2 phosphatidylcholines. Also produced in the brain by primary astrocytes, and esterifies free cholesterol on nascent APOE-containing lipoproteins secreted from glia and influences cerebral spinal fluid (CSF) APOE- and APOA1 levels. Together with APOE and the cholesterol transporter ABCA1, plays a key role in the maturation of glial-derived, nascent lipoproteins. Required for remodeling high-density lipoprotein particles into their spherical forms. In Gerbilliscus gambianus (Gambian gerbil), this protein is Phosphatidylcholine-sterol acyltransferase (LCAT).